The chain runs to 204 residues: uncharacterized protein (204 aa).

Residues 47 to 108 (TDSSDDEGGA…EDSDEEGEGG (62 aa)) form a disordered region. Over residues 49–106 (SSDDEGGASSGDEGEASSDDEGDASSDDEEEASSDGEGVVEDEETLDAEGEDSDEEGE) the composition is skewed to acidic residues.

It is found in the mitochondrion. This is an uncharacterized protein from Paramecium tetraurelia.